The following is a 159-amino-acid chain: Transcription elongation factor GreA (159 aa).

The stretch at 46–73 (AEYHAAKEEQSFVEGRIKEIELKLSRMQ) forms a coiled coil.

This sequence belongs to the GreA/GreB family.

Necessary for efficient RNA polymerase transcription elongation past template-encoded arresting sites. The arresting sites in DNA have the property of trapping a certain fraction of elongating RNA polymerases that pass through, resulting in locked ternary complexes. Cleavage of the nascent transcript by cleavage factors such as GreA or GreB allows the resumption of elongation from the new 3'terminus. GreA releases sequences of 2 to 3 nucleotides. The chain is Transcription elongation factor GreA from Vesicomyosocius okutanii subsp. Calyptogena okutanii (strain HA).